The primary structure comprises 431 residues: Glutamate-1-semialdehyde 2,1-aminomutase (431 aa).

Lysine 269 carries the N6-(pyridoxal phosphate)lysine modification.

The protein belongs to the class-III pyridoxal-phosphate-dependent aminotransferase family. HemL subfamily. In terms of assembly, homodimer. Requires pyridoxal 5'-phosphate as cofactor.

It is found in the cytoplasm. The enzyme catalyses (S)-4-amino-5-oxopentanoate = 5-aminolevulinate. Its pathway is porphyrin-containing compound metabolism; protoporphyrin-IX biosynthesis; 5-aminolevulinate from L-glutamyl-tRNA(Glu): step 2/2. It participates in porphyrin-containing compound metabolism; chlorophyll biosynthesis. The sequence is that of Glutamate-1-semialdehyde 2,1-aminomutase from Chlorobaculum parvum (strain DSM 263 / NCIMB 8327) (Chlorobium vibrioforme subsp. thiosulfatophilum).